A 122-amino-acid polypeptide reads, in one-letter code: Small ribosomal subunit protein uS13 (122 aa).

A disordered region spans residues Arg-99–Lys-122.

This sequence belongs to the universal ribosomal protein uS13 family. As to quaternary structure, part of the 30S ribosomal subunit. Forms a loose heterodimer with protein S19. Forms two bridges to the 50S subunit in the 70S ribosome.

Functionally, located at the top of the head of the 30S subunit, it contacts several helices of the 16S rRNA. In the 70S ribosome it contacts the 23S rRNA (bridge B1a) and protein L5 of the 50S subunit (bridge B1b), connecting the 2 subunits; these bridges are implicated in subunit movement. Contacts the tRNAs in the A and P-sites. This chain is Small ribosomal subunit protein uS13, found in Cereibacter sphaeroides (strain ATCC 17025 / ATH 2.4.3) (Rhodobacter sphaeroides).